The following is a 106-amino-acid chain: Pyrimidine/purine nucleoside phosphorylase (106 aa).

This sequence belongs to the nucleoside phosphorylase PpnP family.

It carries out the reaction a purine D-ribonucleoside + phosphate = a purine nucleobase + alpha-D-ribose 1-phosphate. The catalysed reaction is adenosine + phosphate = alpha-D-ribose 1-phosphate + adenine. It catalyses the reaction cytidine + phosphate = cytosine + alpha-D-ribose 1-phosphate. The enzyme catalyses guanosine + phosphate = alpha-D-ribose 1-phosphate + guanine. It carries out the reaction inosine + phosphate = alpha-D-ribose 1-phosphate + hypoxanthine. The catalysed reaction is thymidine + phosphate = 2-deoxy-alpha-D-ribose 1-phosphate + thymine. It catalyses the reaction uridine + phosphate = alpha-D-ribose 1-phosphate + uracil. The enzyme catalyses xanthosine + phosphate = alpha-D-ribose 1-phosphate + xanthine. Catalyzes the phosphorolysis of diverse nucleosides, yielding D-ribose 1-phosphate and the respective free bases. Can use uridine, adenosine, guanosine, cytidine, thymidine, inosine and xanthosine as substrates. Also catalyzes the reverse reactions. The sequence is that of Pyrimidine/purine nucleoside phosphorylase from Leptospira interrogans serogroup Icterohaemorrhagiae serovar copenhageni (strain Fiocruz L1-130).